The primary structure comprises 128 residues: Protein Wnt-10 (128 aa).

Cystine bridges form between cysteine 3–cysteine 17, cysteine 5–cysteine 12, cysteine 74–cysteine 105, cysteine 90–cysteine 100, and cysteine 127–cysteine 128. Residue serine 9 is the site of O-palmitoleoyl serine; by PORCN attachment. The N-linked (GlcNAc...) asparagine glycan is linked to asparagine 91.

The protein belongs to the Wnt family. In terms of processing, palmitoleoylation is required for efficient binding to frizzled receptors. Depalmitoleoylation leads to Wnt signaling pathway inhibition. In terms of tissue distribution, in embryo, in dorsal hindbrain; in adults, in brain.

It localises to the secreted. The protein resides in the extracellular space. Its subcellular location is the extracellular matrix. Its function is as follows. Ligand for members of the frizzled family of seven transmembrane receptors. Probable developmental protein. May be a signaling molecule which affects the development of discrete regions of tissues. Is likely to signal over only few cell diameters. The protein is Protein Wnt-10 (wnt10) of Xenopus laevis (African clawed frog).